Here is a 265-residue protein sequence, read N- to C-terminus: Phosphate import ATP-binding protein PstB 2 (265 aa).

The 248-residue stretch at 13-260 folds into the ABC transporter domain; it reads FRTENLNVYY…PTKQATRDYV (248 aa). Residue 45-52 participates in ATP binding; that stretch reads GPSGCGKS.

This sequence belongs to the ABC transporter superfamily. Phosphate importer (TC 3.A.1.7) family. As to quaternary structure, the complex is composed of two ATP-binding proteins (PstB), two transmembrane proteins (PstC and PstA) and a solute-binding protein (PstS).

It is found in the cell inner membrane. The catalysed reaction is phosphate(out) + ATP + H2O = ADP + 2 phosphate(in) + H(+). Functionally, part of the ABC transporter complex PstSACB involved in phosphate import. Responsible for energy coupling to the transport system. The sequence is that of Phosphate import ATP-binding protein PstB 2 from Synechococcus sp. (strain JA-2-3B'a(2-13)) (Cyanobacteria bacterium Yellowstone B-Prime).